The following is a 914-amino-acid chain: DNA mismatch repair protein MutS (914 aa).

Positions 1 to 25 (MDKKNDHKNNLIPQPASSFASSQER) are disordered. Residues 11–25 (LIPQPASSFASSQER) show a composition bias toward polar residues. 662-669 (GPNMGGKS) serves as a coordination point for ATP.

It belongs to the DNA mismatch repair MutS family.

Its function is as follows. This protein is involved in the repair of mismatches in DNA. It is possible that it carries out the mismatch recognition step. This protein has a weak ATPase activity. In Bartonella tribocorum (strain CIP 105476 / IBS 506), this protein is DNA mismatch repair protein MutS.